The primary structure comprises 413 residues: Sulfoquinovose isomerase (413 aa).

Residues Arg-55, Tyr-111, Asn-172, His-176, and Arg-238 each contribute to the 6-sulfo-beta-D-quinovose site. Residue His-248 is the Proton donor/acceptor of the active site. Residues Glu-251, Gln-362, Gln-379, and His-383 each coordinate 6-sulfo-beta-D-quinovose. His-383 acts as the Proton donor/acceptor in catalysis.

It belongs to the N-acylglucosamine 2-epimerase family. As to quaternary structure, homohexamer.

It catalyses the reaction 6-sulfo-beta-D-quinovose = 6-deoxy-6-sulfo-D-fructose. It carries out the reaction 6-sulfo-beta-D-quinovose = 6-sulfo-D-rhamnose. Its activity is regulated as follows. Significantly inhibited by Cu(2+), Fe(3+) and Co(2+). Partially inhibited by Mg(2+), Ca(2+) and Mn(2+). Also inhibited by ATP, ADP, dATP, TTP and GTP. Its function is as follows. Catalyzes the isomerization of sulfoquinovose (SQ) to 6-deoxy-6-sulfo-D-fructose (SF). Can also catalyze the interconversion of SQ and sulforhamnose (SR). Has a clear preference for beta-SQ and little-to-no activity on alpha-SQ. In vitro, can also catalyze the interconversion of mannose, fructose and glucose, or lyxose and xylulose, but has extremely low activity with glucose. This Escherichia coli (strain K12) protein is Sulfoquinovose isomerase (yihS).